The primary structure comprises 429 residues: Adenylosuccinate synthetase (429 aa).

GTP is bound by residues 12 to 18 (GDEGKGK) and 40 to 42 (GHT). Aspartate 13 acts as the Proton acceptor in catalysis. 2 residues coordinate Mg(2+): aspartate 13 and glycine 40. Residues 13-16 (DEGK), 38-41 (NAGH), threonine 128, arginine 142, glutamine 223, threonine 238, and arginine 302 contribute to the IMP site. The active-site Proton donor is the histidine 41. 298-304 (TTTGRPR) serves as a coordination point for substrate. GTP-binding positions include arginine 304, 330–332 (SID), and 412–414 (SVG).

This sequence belongs to the adenylosuccinate synthetase family. Homodimer. Mg(2+) serves as cofactor.

The protein localises to the cytoplasm. The enzyme catalyses IMP + L-aspartate + GTP = N(6)-(1,2-dicarboxyethyl)-AMP + GDP + phosphate + 2 H(+). The protein operates within purine metabolism; AMP biosynthesis via de novo pathway; AMP from IMP: step 1/2. Plays an important role in the de novo pathway of purine nucleotide biosynthesis. Catalyzes the first committed step in the biosynthesis of AMP from IMP. In Bacillus cereus (strain ATCC 10987 / NRS 248), this protein is Adenylosuccinate synthetase.